Reading from the N-terminus, the 489-residue chain is Ammonium transporter Rh type C (489 aa).

Residues 1 to 21 (MGNCADCLRGFFCPPKNTNIR) are Cytoplasmic-facing. A helical membrane pass occupies residues 22 to 42 (ISLPAVCFVWQIAMIVLFGVF). Residues 43 to 75 (IRYDAESDIRLWLQLKHTNNITSDIENDFYFRY) lie on the Extracellular side of the membrane. The N-linked (GlcNAc...) asparagine glycan is linked to Asn-62. Residues 76 to 96 (PSFQDVHVMIFVGFGFLMTFL) traverse the membrane as a helical segment. The Cytoplasmic segment spans residues 97-100 (KRYS). A helical transmembrane segment spans residues 101-121 (FGGVGFNFLIGAFGLQWALLM). The Extracellular portion of the chain corresponds to 122-140 (QGWFHALDPTTGKISIGVE). Residues 141–161 (GLINADFCVAASLIAYGALLG) traverse the membrane as a helical segment. Residues 162 to 169 (KVSPVQLM) lie on the Cytoplasmic side of the membrane. Residues 170–190 (VVTLFGVTLFAVEEYIILNLL) form a helical membrane-spanning segment. Topologically, residues 191 to 195 (HCRDA) are extracellular. The chain crosses the membrane as a helical span at residues 196 to 216 (GGSMVIHCFGGYYGLTISWIL). The Cytoplasmic portion of the chain corresponds to 217-235 (YRPKLHQSKRLNGSVYHSD). A helical transmembrane segment spans residues 236–256 (VFAMIGTLFLWMFWPSFNSAI). Residues 257 to 266 (TDHGSGQHRT) are Extracellular-facing. A helical membrane pass occupies residues 267–287 (AINTYIALASSVLTTVAISSA). The Cytoplasmic segment spans residues 288-298 (SEKRGKLDMVH). The chain crosses the membrane as a helical span at residues 299-319 (IQNATLAGGVAMGTAAEFMIT). Pro-320 is a topological domain (extracellular). The chain crosses the membrane as a helical span at residues 321 to 341 (YGALIVGFCTGIISTFGYLFV). At 342-359 (SPFMEKYLKIQDTCGVHN) the chain is on the cytoplasmic side. The helical transmembrane segment at 360–380 (LHAMPGMLGGFIGAIVAAAAT) threads the bilayer. The Extracellular segment spans residues 381–412 (EEVYSREGLIETFDFEGKFADRTVGTQGGFQA). The chain crosses the membrane as a helical span at residues 413–433 (AGVCVAIAFAVVGGAVVGLIL). The Cytoplasmic segment spans residues 434 to 489 (RLPIWGDPADDNCFDDEVYWEVPEDEEGILPVLEYNNHMTHKHQDISESNFSVEQS).

Belongs to the ammonium transporter (TC 2.A.49) family. Rh subfamily. As to quaternary structure, homotrimer.

It localises to the apical cell membrane. Functions as an ammonia transporter. May play a role in the elimination of ammonia in the gill. The chain is Ammonium transporter Rh type C (rhcg) from Gasterosteus aculeatus (Three-spined stickleback).